Consider the following 217-residue polypeptide: MISSVAPPPEKMLFQLSLRRRGISDRGVLQAMESVPRDRFVDAVHRDSAWRDTALPIACGQTISQPFVVAYMTEQLHLQPGHRVLEIGTGSGYHAAVLSRLVRDVVSVERFKTLADRARARLKELNYANVEVVLGDGFALPEGQGTFDRILVTAAMAELPQPLLDLLDPDGILIAPIGPGNGRQTLIRVQRKDDGFLRKPLVDVRFVPALPGIAREL.

The active site involves Ser64.

The protein belongs to the methyltransferase superfamily. L-isoaspartyl/D-aspartyl protein methyltransferase family.

The protein localises to the cytoplasm. It carries out the reaction [protein]-L-isoaspartate + S-adenosyl-L-methionine = [protein]-L-isoaspartate alpha-methyl ester + S-adenosyl-L-homocysteine. Functionally, catalyzes the methyl esterification of L-isoaspartyl residues in peptides and proteins that result from spontaneous decomposition of normal L-aspartyl and L-asparaginyl residues. It plays a role in the repair and/or degradation of damaged proteins. The chain is Protein-L-isoaspartate O-methyltransferase 2 from Rhodopseudomonas palustris (strain HaA2).